The sequence spans 185 residues: Threonylcarbamoyl-AMP synthase (185 aa).

A YrdC-like domain is found at 4–185 (SFRAQCAARV…LVTGQVIRPA (182 aa)).

Belongs to the SUA5 family. TsaC subfamily.

Its subcellular location is the cytoplasm. It catalyses the reaction L-threonine + hydrogencarbonate + ATP = L-threonylcarbamoyladenylate + diphosphate + H2O. Its function is as follows. Required for the formation of a threonylcarbamoyl group on adenosine at position 37 (t(6)A37) in tRNAs that read codons beginning with adenine. Catalyzes the conversion of L-threonine, HCO(3)(-)/CO(2) and ATP to give threonylcarbamoyl-AMP (TC-AMP) as the acyladenylate intermediate, with the release of diphosphate. This is Threonylcarbamoyl-AMP synthase from Pseudomonas paraeruginosa (strain DSM 24068 / PA7) (Pseudomonas aeruginosa (strain PA7)).